Reading from the N-terminus, the 203-residue chain is ATP-dependent Clp protease proteolytic subunit (203 aa).

The active-site Nucleophile is Ser-107. The active site involves His-132.

It belongs to the peptidase S14 family. In terms of assembly, fourteen ClpP subunits assemble into 2 heptameric rings which stack back to back to give a disk-like structure with a central cavity, resembling the structure of eukaryotic proteasomes.

It is found in the cytoplasm. The catalysed reaction is Hydrolysis of proteins to small peptides in the presence of ATP and magnesium. alpha-casein is the usual test substrate. In the absence of ATP, only oligopeptides shorter than five residues are hydrolyzed (such as succinyl-Leu-Tyr-|-NHMec, and Leu-Tyr-Leu-|-Tyr-Trp, in which cleavage of the -Tyr-|-Leu- and -Tyr-|-Trp bonds also occurs).. In terms of biological role, cleaves peptides in various proteins in a process that requires ATP hydrolysis. Has a chymotrypsin-like activity. Plays a major role in the degradation of misfolded proteins. In Thermotoga maritima (strain ATCC 43589 / DSM 3109 / JCM 10099 / NBRC 100826 / MSB8), this protein is ATP-dependent Clp protease proteolytic subunit.